The chain runs to 364 residues: Peptide chain release factor 2 (364 aa).

Glutamine 252 is subject to N5-methylglutamine.

The protein belongs to the prokaryotic/mitochondrial release factor family. Methylated by PrmC. Methylation increases the termination efficiency of RF2.

Its subcellular location is the cytoplasm. Peptide chain release factor 2 directs the termination of translation in response to the peptide chain termination codons UGA and UAA. This Clostridium perfringens (strain SM101 / Type A) protein is Peptide chain release factor 2.